Consider the following 190-residue polypeptide: Lipid A acyltransferase PagP (190 aa).

The N-terminal stretch at M1–A18 is a signal peptide. Residues H60, D103, and S104 contribute to the active site.

The protein belongs to the lipid A palmitoyltransferase family. Homodimer.

It localises to the cell outer membrane. It carries out the reaction a lipid A + a 1,2-diacyl-sn-glycero-3-phosphocholine = a hepta-acyl lipid A + a 2-acyl-sn-glycero-3-phosphocholine. It catalyses the reaction a lipid IVA + a 1,2-diacyl-sn-glycero-3-phosphocholine = a lipid IVB + a 2-acyl-sn-glycero-3-phosphocholine. The enzyme catalyses a lipid IIA + a 1,2-diacyl-sn-glycero-3-phosphocholine = a lipid IIB + a 2-acyl-sn-glycero-3-phosphocholine. Functionally, transfers a fatty acid residue from the sn-1 position of a phospholipid to the N-linked hydroxyfatty acid chain on the proximal unit of lipid A or its precursors. This is Lipid A acyltransferase PagP from Legionella pneumophila (strain Corby).